Here is a 329-residue protein sequence, read N- to C-terminus: G-protein coupled bile acid receptor 1 (329 aa).

Residues Met-1–Gly-19 lie on the Extracellular side of the membrane. An N-linked (GlcNAc...) asparagine glycan is attached at Asn-4. A helical membrane pass occupies residues Leu-20–Ala-40. The Cytoplasmic segment spans residues Gly-41–Cys-52. Residues Phe-53–Val-73 traverse the membrane as a helical segment. Over Leu-74–Cys-85 the chain is Extracellular. A disulfide bridge connects residues Cys-85 and Cys-155. A helical transmembrane segment spans residues Leu-86–Val-106. Topologically, residues His-107–Arg-125 are cytoplasmic. Residues Leu-126–Trp-146 form a helical membrane-spanning segment. Over Asn-147–Tyr-165 the chain is Extracellular. The N-linked (GlcNAc...) asparagine glycan is linked to Asn-154. A helical membrane pass occupies residues Leu-166–Val-186. The Cytoplasmic segment spans residues Arg-187 to Thr-230. The chain crosses the membrane as a helical span at residues Leu-231–Phe-251. Residues Glu-252 to Thr-261 are Extracellular-facing. A helical membrane pass occupies residues Leu-262–Leu-282. At Gly-283–Asn-329 the chain is on the cytoplasmic side. The interval Gly-304–Asn-329 is disordered. Residues Pro-306–Asn-329 show a composition bias toward polar residues.

Belongs to the G-protein coupled receptor 1 family.

It is found in the cell membrane. Receptor for bile acid. Bile acid-binding induces its internalization, activation of extracellular signal-regulated kinase and intracellular cAMP production. May be involved in the suppression of macrophage functions by bile acids. Involved in bile acid promoted GLP1R secretion. In Bos taurus (Bovine), this protein is G-protein coupled bile acid receptor 1 (GPBAR1).